A 379-amino-acid polypeptide reads, in one-letter code: Heme chaperone HemW (379 aa).

Residues 1-233 enclose the Radical SAM core domain; sequence MKSAYIHIPF…MSKMEAHGIH (233 aa). Y5 provides a ligand contact to S-adenosyl-L-methionine. The [4Fe-4S] cluster site is built by C11, C15, and C18. S-adenosyl-L-methionine is bound by residues G60, 61–62, E94, Q121, R133, and D158; that span reads GT.

This sequence belongs to the anaerobic coproporphyrinogen-III oxidase family. HemW subfamily. [4Fe-4S] cluster serves as cofactor.

It is found in the cytoplasm. In terms of biological role, probably acts as a heme chaperone, transferring heme to an unknown acceptor. Binds one molecule of heme per monomer, possibly covalently. Binds 1 [4Fe-4S] cluster. The cluster is coordinated with 3 cysteines and an exchangeable S-adenosyl-L-methionine. This Bacillus subtilis (strain 168) protein is Heme chaperone HemW.